The following is a 309-amino-acid chain: tRNA-cytidine(32) 2-sulfurtransferase (309 aa).

The short motif at 47–52 is the PP-loop motif element; that stretch reads SGGKDS. Residues Cys-122, Cys-125, and Cys-213 each contribute to the [4Fe-4S] cluster site.

Belongs to the TtcA family. In terms of assembly, homodimer. It depends on Mg(2+) as a cofactor. Requires [4Fe-4S] cluster as cofactor.

It is found in the cytoplasm. The catalysed reaction is cytidine(32) in tRNA + S-sulfanyl-L-cysteinyl-[cysteine desulfurase] + AH2 + ATP = 2-thiocytidine(32) in tRNA + L-cysteinyl-[cysteine desulfurase] + A + AMP + diphosphate + H(+). It participates in tRNA modification. Functionally, catalyzes the ATP-dependent 2-thiolation of cytidine in position 32 of tRNA, to form 2-thiocytidine (s(2)C32). The sulfur atoms are provided by the cysteine/cysteine desulfurase (IscS) system. The polypeptide is tRNA-cytidine(32) 2-sulfurtransferase (Erwinia tasmaniensis (strain DSM 17950 / CFBP 7177 / CIP 109463 / NCPPB 4357 / Et1/99)).